Consider the following 113-residue polypeptide: T cell receptor alpha variable 13-2 (113 aa).

Positions 1–21 (MAGIRALFMYLWLQLDWVSRG) are cleaved as a signal peptide. Positions 22-113 (ESVGLHLPTL…DSAVYFCAEN (92 aa)) constitute an Ig-like domain. Cysteines 43 and 110 form a disulfide. N-linked (GlcNAc...) asparagine glycosylation occurs at N87.

Alpha-beta TR is a heterodimer composed of an alpha and beta chain; disulfide-linked. The alpha-beta TR is associated with the transmembrane signaling CD3 coreceptor proteins to form the TR-CD3 (TcR or TCR). The assembly of alpha-beta TR heterodimers with CD3 occurs in the endoplasmic reticulum where a single alpha-beta TR heterodimer associates with one CD3D-CD3E heterodimer, one CD3G-CD3E heterodimer and one CD247 homodimer forming a stable octameric structure. CD3D-CD3E and CD3G-CD3E heterodimers preferentially associate with TR alpha and TR beta chains, respectively. The association of the CD247 homodimer is the last step of TcR assembly in the endoplasmic reticulum and is required for transport to the cell surface.

It is found in the cell membrane. In terms of biological role, v region of the variable domain of T cell receptor (TR) alpha chain that participates in the antigen recognition. Alpha-beta T cell receptors are antigen specific receptors which are essential to the immune response and are present on the cell surface of T lymphocytes. Recognize peptide-major histocompatibility (MH) (pMH) complexes that are displayed by antigen presenting cells (APC), a prerequisite for efficient T cell adaptive immunity against pathogens. Binding of alpha-beta TR to pMH complex initiates TR-CD3 clustering on the cell surface and intracellular activation of LCK that phosphorylates the ITAM motifs of CD3G, CD3D, CD3E and CD247 enabling the recruitment of ZAP70. In turn ZAP70 phosphorylates LAT, which recruits numerous signaling molecules to form the LAT signalosome. The LAT signalosome propagates signal branching to three major signaling pathways, the calcium, the mitogen-activated protein kinase (MAPK) kinase and the nuclear factor NF-kappa-B (NF-kB) pathways, leading to the mobilization of transcription factors that are critical for gene expression and essential for T cell growth and differentiation. The T cell repertoire is generated in the thymus, by V-(D)-J rearrangement. This repertoire is then shaped by intrathymic selection events to generate a peripheral T cell pool of self-MH restricted, non-autoaggressive T cells. Post-thymic interaction of alpha-beta TR with the pMH complexes shapes TR structural and functional avidity. The sequence is that of T cell receptor alpha variable 13-2 from Homo sapiens (Human).